The chain runs to 427 residues: Glutamate-1-semialdehyde 2,1-aminomutase (427 aa).

Lys-265 carries the post-translational modification N6-(pyridoxal phosphate)lysine.

This sequence belongs to the class-III pyridoxal-phosphate-dependent aminotransferase family. HemL subfamily. As to quaternary structure, homodimer. Pyridoxal 5'-phosphate serves as cofactor.

The protein resides in the cytoplasm. The catalysed reaction is (S)-4-amino-5-oxopentanoate = 5-aminolevulinate. The protein operates within porphyrin-containing compound metabolism; protoporphyrin-IX biosynthesis; 5-aminolevulinate from L-glutamyl-tRNA(Glu): step 2/2. This Pseudomonas syringae pv. syringae (strain B728a) protein is Glutamate-1-semialdehyde 2,1-aminomutase.